The sequence spans 118 residues: Large ribosomal subunit protein bL20 (118 aa).

It belongs to the bacterial ribosomal protein bL20 family.

Binds directly to 23S ribosomal RNA and is necessary for the in vitro assembly process of the 50S ribosomal subunit. It is not involved in the protein synthesizing functions of that subunit. In Lactobacillus johnsonii (strain CNCM I-12250 / La1 / NCC 533), this protein is Large ribosomal subunit protein bL20.